Reading from the N-terminus, the 736-residue chain is 1,4-alpha-glucan branching enzyme GlgB (736 aa).

The Nucleophile role is filled by D415. The active-site Proton donor is E470.

This sequence belongs to the glycosyl hydrolase 13 family. GlgB subfamily. Monomer.

It carries out the reaction Transfers a segment of a (1-&gt;4)-alpha-D-glucan chain to a primary hydroxy group in a similar glucan chain.. It functions in the pathway glycan biosynthesis; glycogen biosynthesis. Its function is as follows. Catalyzes the formation of the alpha-1,6-glucosidic linkages in glycogen by scission of a 1,4-alpha-linked oligosaccharide from growing alpha-1,4-glucan chains and the subsequent attachment of the oligosaccharide to the alpha-1,6 position. This Burkholderia cenocepacia (strain HI2424) protein is 1,4-alpha-glucan branching enzyme GlgB.